The following is a 366-amino-acid chain: 3-dehydroquinate synthase (366 aa).

NAD(+) contacts are provided by residues aspartate 71–lysine 76, glycine 105–aspartate 109, threonine 129–threonine 130, lysine 142, lysine 151, and cysteine 169–threonine 172. 3 residues coordinate Zn(2+): glutamate 184, histidine 248, and histidine 265.

This sequence belongs to the sugar phosphate cyclases superfamily. Dehydroquinate synthase family. NAD(+) is required as a cofactor. It depends on Co(2+) as a cofactor. Requires Zn(2+) as cofactor.

Its subcellular location is the cytoplasm. It catalyses the reaction 7-phospho-2-dehydro-3-deoxy-D-arabino-heptonate = 3-dehydroquinate + phosphate. It participates in metabolic intermediate biosynthesis; chorismate biosynthesis; chorismate from D-erythrose 4-phosphate and phosphoenolpyruvate: step 2/7. In terms of biological role, catalyzes the conversion of 3-deoxy-D-arabino-heptulosonate 7-phosphate (DAHP) to dehydroquinate (DHQ). This chain is 3-dehydroquinate synthase, found in Photorhabdus laumondii subsp. laumondii (strain DSM 15139 / CIP 105565 / TT01) (Photorhabdus luminescens subsp. laumondii).